Reading from the N-terminus, the 490-residue chain is MDFLIIVSTLLLSYILIWVLGVGKPKNLPPGPTRLPIIGNLHLLGALPHQSLAKLAKIHGPIMSLQLGQITTLVISSATAAEEVLKKQDLAFSTRNVPDAVRAYNHERHSISFLHVCTEWRTLRRIVSSNIFSNSSLEAKQHLRSKKVEELIAYCRKAALSNENVHIGRAAFRTSLNLLSNTIFSKDLTDPYEDSGKEFREVITNIMVDSAKTNLVDVFPVLKKIDPQGIKRGMARHFSKVLGIFDQLIEERMRTGRFEQGDVLDVCLKMMQDNPNEFNHTNIKALFLDLFVAGTDTTSITIEWAMTELLRKPHIMSKAKEELEKVIGKGSIVKEDDVLRLPYLSCIVKEVLRLHPPSPLLLPRKVVTQVELSGYTIPAGTLVFVNAWAIGRDPTVWDDSLEFKPQRFLESRLDVRGHDFDLIPFGAGRRICPGIPLATRMVPIMLGSLLNNFDWKIDTKVPYDVLDMTEKNGTTISKAKPLCVVPIPLN.

Cys432 serves as a coordination point for heme.

Belongs to the cytochrome P450 family. It depends on heme as a cofactor.

In terms of biological role, capable of dealkylating a model xenobiotic compound, 7-ethoxycoumarin. Metabolizes with high efficiency a wide range of xenobiotics, including alkoxycoumarins, alkoxyresorufins, and several herbicides of the class of phenylureas. Catalyzes the double N-dealkylation (oxidative N-demethylation) of phenylureas such as chlortoluron and isoproturon with turnover rates comparable to those reported for physiological substrates and produces non-phytotoxic compounds. Could be used for control of herbicide tolerance and selectivity, as well as soil and groundwater bioremediation. This chain is 7-ethoxycoumarin O-deethylase (CYP76B1), found in Helianthus tuberosus (Jerusalem artichoke).